The sequence spans 643 residues: Zinc finger protein 23 (643 aa).

Positions 1–43 (MLENYGNVASLGFPLLKPAVISQLEGGSELGGSSPLAAGTGLQ) constitute a KRAB domain. Lysine 157 is covalently cross-linked (Glycyl lysine isopeptide (Lys-Gly) (interchain with G-Cter in SUMO2)). The C2H2-type 1; degenerate zinc-finger motif lies at 168 to 190 (FKCEELVEPFRCDSQLIQHQENN). 16 consecutive C2H2-type zinc fingers follow at residues 196 to 218 (YQCSECGKAFSINEKLIWHQRLH), 224 to 246 (FKCVECGKSFSYSSHYITHQTIH), 252 to 274 (YQCKMCGKAFSVNGSLSRHQRIH), 280 to 302 (YQCKECGNGFSCSSAYITHQRVH), 308 to 330 (YECNDCGKAFNVNAKLIQHQRIH), 336 to 358 (YECNECGKGFRCSSQLRQHQSIH), 364 to 386 (YQCKECGKGFNNNTKLIQHQRIH), 392 to 414 (YECTECGKAFSVKGKLIQHQRIH), 420 to 442 (YECNECGKAFRCNSQFRQHLRIH), 448 to 470 (YECNECGKAFSVNGKLMRHQRIH), 476 to 498 (FECNECGRCFTSKRNLLDHHRIH), 504 to 526 (YQCKECGKAFSINAKLTRHQRIH), 532 to 554 (FKCMECEKAFSCSSNYIVHQRIH), 560 to 582 (FQCKECGKAFHVNAHLIRHQRSH), 588 to 610 (FRCVECGKGFSFSSDYIIHQTVH), and 616 to 638 (YMCSVCGKAFRFSFQLSQHQSVH).

The protein belongs to the krueppel C2H2-type zinc-finger protein family.

The protein localises to the nucleus. Its function is as follows. May be involved in transcriptional regulation. May have a role in embryonic development. This Homo sapiens (Human) protein is Zinc finger protein 23 (ZNF23).